The chain runs to 796 residues: Quinoprotein glucose dehydrogenase (796 aa).

Residues 1 to 10 (MAINNTGSRR) are Cytoplasmic-facing. A helical transmembrane segment spans residues 11-37 (LLVTLTALFAALCGLYLLIGGGWLVAI). The Periplasmic segment spans residues 38–40 (GGS). The helical transmembrane segment at 41–58 (WYYPIAGLVMLGVAWMLW) threads the bilayer. The Cytoplasmic portion of the chain corresponds to 59 to 62 (RSKR). A helical transmembrane segment spans residues 63-81 (AALWLYAALLLGTMIWGVW). Residues 82–95 (EVGFDFWALTPRSD) lie on the Periplasmic side of the membrane. The helical transmembrane segment at 96-110 (ILVFFGIWLILPFVW) threads the bilayer. Over 111–118 (RRLVIPAS) the chain is Cytoplasmic. A helical transmembrane segment spans residues 119–141 (GAVAALVVALLISGGILTWAGFN). Residues 142–796 (DPQEINGTLS…VAYALPDDVK (655 aa)) are Periplasmic-facing. The active-site Proton acceptor is Asp466.

Belongs to the bacterial PQQ dehydrogenase family. Monomer. It depends on pyrroloquinoline quinone as a cofactor.

The protein resides in the cell inner membrane. It catalyses the reaction a ubiquinone + D-glucose = D-glucono-1,5-lactone + a ubiquinol. In terms of biological role, GDH is probably involved in energy conservation rather than in sugar metabolism. This is Quinoprotein glucose dehydrogenase (gcd) from Escherichia coli (strain K12).